Consider the following 791-residue polypeptide: Solute carrier family 26 member 9 (791 aa).

Residues 1–70 lie on the Cytoplasmic side of the membrane; sequence MSQPRPRYVV…WLPKYKIKDY (70 aa). A helical membrane pass occupies residues 71–96; the sequence is IIPDLLGGLSGGSIQVPQGMAFALLA. The Extracellular segment spans residues 97–99; the sequence is NLP. A helical transmembrane segment spans residues 100-117; the sequence is AVNGLYSSFFPLLTYFFL. At 118 to 128 the chain is on the cytoplasmic side; the sequence is GGVHQMVPGTF. Residues 129 to 142 traverse the membrane as a helical segment; it reads AVISILVGNICLQL. Residues 143–171 lie on the Extracellular side of the membrane; it reads APESKFQVFNNATNESYVDTAAMEAERLH. Residues 172 to 190 form a helical membrane-spanning segment; sequence VSATLACLTAIIQMGLGFM. Residues 191-202 lie on the Cytoplasmic side of the membrane; the sequence is QFGFVAIYLSES. The chain crosses the membrane as a helical span at residues 203–224; sequence FIRGFMTAAGLQILISVLKYIF. Over 225-235 the chain is Extracellular; that stretch reads GLTIPSYTGPG. Positions 236–244 form an intramembrane region, helical; the sequence is SIVFTFIDI. The Extracellular portion of the chain corresponds to 245 to 254; it reads CKNLPHTNIA. A helical transmembrane segment spans residues 255–273; it reads SLIFALISGAFLVLVKELN. Residues 274-281 are Cytoplasmic-facing; sequence ARYMHKIR. The chain crosses the membrane as a helical span at residues 282 to 297; sequence FPIPTEMIVVVVATAI. Residues 298–327 are Extracellular-facing; sequence SGGCKMPKKYHMQIVGEIQRGFPTPVSPVV. The chain crosses the membrane as a helical span at residues 328 to 348; the sequence is SQWKDMIGTAFSLAIVSYVIN. Over 349-366 the chain is Cytoplasmic; the sequence is LAMGRTLANKHGYDVDSN. The helical transmembrane segment at 367-382 threads the bilayer; the sequence is QEMIALGCSNFFGSFF. Residues 383–390 lie on the Extracellular side of the membrane; that stretch reads KIHVICCA. The chain crosses the membrane as a helical span at residues 391–400; sequence LSVTLAVDGA. The Cytoplasmic portion of the chain corresponds to 401 to 404; the sequence is GGKS. The helical transmembrane segment at 405–423 threads the bilayer; the sequence is QVASLCVSLVVMITMLVLG. Residues 424–428 are Extracellular-facing; the sequence is IYLYP. The helical transmembrane segment at 429–450 threads the bilayer; that stretch reads LPKSVLGALIAVNLKNSLKQLT. The Cytoplasmic segment spans residues 451–464; the sequence is DPYYLWRKSKLDCC. The helical transmembrane segment at 465–476 threads the bilayer; it reads IWVVSFLSSFFL. Ser477 is a topological domain (extracellular). Residues 478-489 traverse the membrane as a helical segment; that stretch reads LPYGVAVGVAFS. Residues 490–791 are Cytoplasmic-facing; that stretch reads VLVVVFQTQF…MFHAETLTAL (302 aa). Positions 519–737 constitute an STAS domain; the sequence is TYNRAQDIQG…PSIHDAVLFA (219 aa). The disordered stretch occupies residues 602–650; sequence FENAPPTDPNNNQTPANGTSVSYITFSPDSSSPAQSEPPASAEAPGEPS. Residues 610–626 are compositionally biased toward polar residues; that stretch reads PNNNQTPANGTSVSYIT. Over residues 628-650 the composition is skewed to low complexity; sequence SPDSSSPAQSEPPASAEAPGEPS.

Belongs to the SLC26A/SulP transporter (TC 2.A.53) family. As to quaternary structure, homodimer. Predominantly expressed in lung at the luminal side of the bronchiolar and alveolar epithelium of lung. To a lower extent, also expressed in pancreas and prostate.

Its subcellular location is the cell membrane. The protein localises to the endomembrane system. The enzyme catalyses chloride(in) = chloride(out). It catalyses the reaction hydrogencarbonate(in) + chloride(out) = hydrogencarbonate(out) + chloride(in). With respect to regulation, inhibited by ammonium and thiosulfate. Ion transporter that can act both as an ion channel and anion exchanger. Mainly acts as a chloride channel, which mediate uncoupled chloride anion transport in an alternate-access mechanism where a saturable binding site is alternately exposed to either one or the other side of the membrane. Also acts as a DIDS- and thiosulfate- sensitive anion exchanger the exchange of chloride for bicarbonate ions across the cell membrane. The polypeptide is Solute carrier family 26 member 9 (Homo sapiens (Human)).